The chain runs to 109 residues: UPF0060 membrane protein PA14_21660 (109 aa).

Helical transmembrane passes span 5 to 25, 27 to 47, 59 to 79, and 84 to 104; these read LWFV…YLWL, LGKS…FALL, AYAA…AFVE, and LWSD…VLFG.

The protein belongs to the UPF0060 family.

Its subcellular location is the cell inner membrane. The chain is UPF0060 membrane protein PA14_21660 from Pseudomonas aeruginosa (strain UCBPP-PA14).